The following is a 292-amino-acid chain: Transcription factor-like protein DPA (292 aa).

Residues 1-25 (MSMEMELFVTPEKQRQHPSVSVEKT) form a disordered region. The DNA-binding element occupies 51–135 (GGGLRQFSVM…KKEIRWKGLP (85 aa)). The short motif at 101 to 135 (NEKNIRRRVYDALNVFMALDIIARDKKEIRWKGLP) is the DEF box element. Positions 163-184 (LKELREKVSSLESLMSRNQEMV) form a coiled coil. Residues 246 to 280 (QEQNRVSSSSSTHHQSQHSSAHSSSSSCIASGTSG) are disordered. Residues 252–280 (SSSSSTHHQSQHSSAHSSSSSCIASGTSG) are compositionally biased toward low complexity.

Belongs to the E2F/DP family. Heterodimer with E2F. Interacts preferentially with E2FA and E2FB, but also with E2FC. As to expression, strongly expressed in the actively dividing tissues of the shoot apical meristem, young leaf primordia, the vascular tissues of the maturing leaf primordia and axillary buds.

It is found in the cytoplasm. The protein resides in the nucleus. Its function is as follows. Involved in the regulation of the G1/S transition. Increases the DNA binding and the transactivation activities of E2F proteins after heterodimerization. The complex DPA/E2FA promotes cell division and acts as a regulator of the endocycle. Positively regulates the activity of S phase-specific genes. The sequence is that of Transcription factor-like protein DPA (DPA) from Arabidopsis thaliana (Mouse-ear cress).